The sequence spans 316 residues: Ribose-phosphate pyrophosphokinase (316 aa).

Residues 41 to 43 (DGE) and 100 to 101 (RQ) each bind ATP. H134 and D175 together coordinate Mg(2+). The active site involves K198. Residues R200, D224, and 228 to 232 (DTARS) contribute to the D-ribose 5-phosphate site.

Belongs to the ribose-phosphate pyrophosphokinase family. Class I subfamily. As to quaternary structure, homohexamer. Mg(2+) is required as a cofactor.

The protein resides in the cytoplasm. The catalysed reaction is D-ribose 5-phosphate + ATP = 5-phospho-alpha-D-ribose 1-diphosphate + AMP + H(+). The protein operates within metabolic intermediate biosynthesis; 5-phospho-alpha-D-ribose 1-diphosphate biosynthesis; 5-phospho-alpha-D-ribose 1-diphosphate from D-ribose 5-phosphate (route I): step 1/1. In terms of biological role, involved in the biosynthesis of the central metabolite phospho-alpha-D-ribosyl-1-pyrophosphate (PRPP) via the transfer of pyrophosphoryl group from ATP to 1-hydroxyl of ribose-5-phosphate (Rib-5-P). The protein is Ribose-phosphate pyrophosphokinase of Thermosipho africanus (strain TCF52B).